The primary structure comprises 303 residues: MAQNVYGPGVRMGNWNEDVYLEEERMRHFLEKREKGELLIQRNRRVKKNILRPMQLSVSEDGYVHYGDKVIIVNPDQVLGEEAGKFMRGDLSLCMSPDEVKAQLSDDLEIPCGVSAVQTIAPMGRNTFTILSDGANSCEMGQVVVYGQNFCLGIAAGLEGKMLYLTSDHRTLLKSSLKSGLQEVTLTDEVTHLNCWQAAFLDPQLRLEYEGFPVRANEKIVIYHRHTNRALAVHRNLFLRTYFGKEMEVVAHTYLDSHKVEKPKNQWMLVTGNPRNKSNTMLDISKPITEDTRALEQAMGINT.

In terms of assembly, microtubule inner protein component of sperm flagellar doublet microtubules.

It localises to the cytoplasm. Its subcellular location is the cytoskeleton. The protein localises to the cilium axoneme. It is found in the flagellum axoneme. Functionally, microtubule inner protein (MIP) part of the dynein-decorated doublet microtubules (DMTs) in cilia axoneme, which is required for motile cilia beating. The polypeptide is Cilia- and flagella-associated protein 161 (Mus musculus (Mouse)).